The chain runs to 474 residues: Aspartic-type endopeptidase ctsD (474 aa).

The first 19 residues, 1 to 19 (MHLLQCLLSTISLASTVTA), serve as a signal peptide directing secretion. Residues 106–413 (YFATVRVGSQ…DYDNHRIGFA (308 aa)) enclose the Peptidase A1 domain. Residue D124 is part of the active site. N189, N197, N275, and N301 each carry an N-linked (GlcNAc...) asparagine glycan. The active site involves D307. N-linked (GlcNAc...) asparagine glycosylation is found at N338, N344, and N414. S452 carries the GPI-anchor amidated serine lipid modification. A propeptide spans 453–474 (ASIVSRFVHWPFIFALLCMVLV) (removed in mature form).

This sequence belongs to the peptidase A1 family.

It is found in the cell membrane. Its function is as follows. Secreted aspartic-type endopeptidase which is secreted and contributes to virulence. This chain is Aspartic-type endopeptidase ctsD (ctsD), found in Aspergillus fumigatus (strain ATCC MYA-4609 / CBS 101355 / FGSC A1100 / Af293) (Neosartorya fumigata).